Reading from the N-terminus, the 143-residue chain is Large ribosomal subunit protein uL11 (143 aa).

The protein belongs to the universal ribosomal protein uL11 family. In terms of assembly, part of the ribosomal stalk of the 50S ribosomal subunit. Interacts with L10 and the large rRNA to form the base of the stalk. L10 forms an elongated spine to which L12 dimers bind in a sequential fashion forming a multimeric L10(L12)X complex. In terms of processing, one or more lysine residues are methylated.

Its function is as follows. Forms part of the ribosomal stalk which helps the ribosome interact with GTP-bound translation factors. This is Large ribosomal subunit protein uL11 from Albidiferax ferrireducens (strain ATCC BAA-621 / DSM 15236 / T118) (Rhodoferax ferrireducens).